The following is a 197-amino-acid chain: Imidazoleglycerol-phosphate dehydratase (197 aa).

This sequence belongs to the imidazoleglycerol-phosphate dehydratase family.

The protein localises to the cytoplasm. It catalyses the reaction D-erythro-1-(imidazol-4-yl)glycerol 3-phosphate = 3-(imidazol-4-yl)-2-oxopropyl phosphate + H2O. Its pathway is amino-acid biosynthesis; L-histidine biosynthesis; L-histidine from 5-phospho-alpha-D-ribose 1-diphosphate: step 6/9. The sequence is that of Imidazoleglycerol-phosphate dehydratase from Chromohalobacter salexigens (strain ATCC BAA-138 / DSM 3043 / CIP 106854 / NCIMB 13768 / 1H11).